The primary structure comprises 89 residues: Small ribosomal subunit protein uS15 (89 aa).

This sequence belongs to the universal ribosomal protein uS15 family. In terms of assembly, part of the 30S ribosomal subunit. Forms a bridge to the 50S subunit in the 70S ribosome, contacting the 23S rRNA.

Its function is as follows. One of the primary rRNA binding proteins, it binds directly to 16S rRNA where it helps nucleate assembly of the platform of the 30S subunit by binding and bridging several RNA helices of the 16S rRNA. Functionally, forms an intersubunit bridge (bridge B4) with the 23S rRNA of the 50S subunit in the ribosome. This is Small ribosomal subunit protein uS15 from Chlamydia abortus (strain DSM 27085 / S26/3) (Chlamydophila abortus).